A 486-amino-acid chain; its full sequence is Acetyl-coenzyme A carboxylase carboxyl transferase subunit beta, chloroplastic (486 aa).

The 263-residue stretch at 224-486 (LWVQCENCYG…FQFHGFFPRP (263 aa)) folds into the CoA carboxyltransferase N-terminal domain. Zn(2+) contacts are provided by C228, C231, C247, and C250. The C4-type zinc-finger motif lies at 228–250 (CENCYGLNYKKFFSSKMNICEQC).

Belongs to the AccD/PCCB family. As to quaternary structure, acetyl-CoA carboxylase is a heterohexamer composed of biotin carboxyl carrier protein, biotin carboxylase and 2 subunits each of ACCase subunit alpha and ACCase plastid-coded subunit beta (accD). Requires Zn(2+) as cofactor.

It localises to the plastid. The protein localises to the chloroplast stroma. The catalysed reaction is N(6)-carboxybiotinyl-L-lysyl-[protein] + acetyl-CoA = N(6)-biotinyl-L-lysyl-[protein] + malonyl-CoA. The protein operates within lipid metabolism; malonyl-CoA biosynthesis; malonyl-CoA from acetyl-CoA: step 1/1. Functionally, component of the acetyl coenzyme A carboxylase (ACC) complex. Biotin carboxylase (BC) catalyzes the carboxylation of biotin on its carrier protein (BCCP) and then the CO(2) group is transferred by the transcarboxylase to acetyl-CoA to form malonyl-CoA. This chain is Acetyl-coenzyme A carboxylase carboxyl transferase subunit beta, chloroplastic, found in Nymphaea alba (White water-lily).